Here is a 372-residue protein sequence, read N- to C-terminus: MDHIELISSPLDITTLYTLLGDPGCGASSVFVGTTRDSFEGKKVLSLEYEAYEPMAIKEMKTICTDLRAKWPDLKHIVIYHRLGSVPVGEASVVIATSAPHRLSALESVSLAVDQLKTRVPIWKKELYEGDDPAQWKENKESLRPKHSQVTSNRFNFATCKIEKQNENISDKLVQIRVHDDELSKRVECFVRRKRMEINMLNVRDFTQNQSLPHVLNNEEAEVSCARTQGAVIKQEQSNCHLKVRRVNNKSGPQQMHLRPNYAQELNKLMGSSESSCDPSGQVQNDLANNRLRTIESYMGLSANNQSLLSRLKQVENRILLLESTSPEYNHFTNNLKQPDSEEPSPKRLKRKIYCAEELNNLLKSFKDETGS.

Substrate is bound by residues 101–102, Lys117, and 124–126; these read HR and KKE.

Belongs to the MoaE family. MOCS2B subfamily. As to quaternary structure, heterotetramer; composed of 2 small (Mocs2A) and 2 large (Mocs2B) subunits.

It is found in the cytoplasm. It carries out the reaction 2 [molybdopterin-synthase sulfur-carrier protein]-C-terminal-Gly-aminoethanethioate + cyclic pyranopterin phosphate + H2O = molybdopterin + 2 [molybdopterin-synthase sulfur-carrier protein]-C-terminal Gly-Gly + 2 H(+). It participates in cofactor biosynthesis; molybdopterin biosynthesis. Functionally, catalytic subunit of the molybdopterin synthase complex, a complex that catalyzes the conversion of precursor Z into molybdopterin. Acts by mediating the incorporation of 2 sulfur atoms from thiocarboxylated Mocs2A into precursor Z to generate a dithiolene group. This chain is Molybdopterin synthase catalytic subunit, found in Drosophila willistoni (Fruit fly).